Consider the following 123-residue polypeptide: WAP four-disulfide core domain protein 5 (123 aa).

The N-terminal stretch at 1–24 (MRIQSLLLLGALLAVGSQPPAAFG) is a signal peptide. 2 WAP domains span residues 27–73 (KGEK…CVPR) and 74–121 (VSVK…RDPV). 8 disulfides stabilise this stretch: cysteine 34/cysteine 62, cysteine 41/cysteine 66, cysteine 49/cysteine 61, cysteine 55/cysteine 70, cysteine 81/cysteine 109, cysteine 88/cysteine 113, cysteine 96/cysteine 108, and cysteine 102/cysteine 117.

The protein localises to the secreted. Putative acid-stable proteinase inhibitor. The protein is WAP four-disulfide core domain protein 5 (WFDC5) of Aotus nancymaae (Ma's night monkey).